A 194-amino-acid chain; its full sequence is Large ribosomal subunit protein eL15 (194 aa).

The interval 160-194 (RGLTSAGKKGRGLMYKGKGAEKVRPSVRANSKKAK) is disordered.

This sequence belongs to the eukaryotic ribosomal protein eL15 family.

This chain is Large ribosomal subunit protein eL15, found in Methanococcus maripaludis (strain C6 / ATCC BAA-1332).